Here is a 223-residue protein sequence, read N- to C-terminus: MAEVKLLGFWYSPFSHRVEWALKIKGVKYEYIEEDRDNKSSLLLQSNPVYKKVPVLIHNGKPIVESMIILEYIDETFEGPSILPKDPYDRALARFWAKFLDDKVAAVVNTFFRKGEEQEKGKEEVYEMLKVLDNELKDKKFFAGDKFGFADIAANLVGFWLGVFEEGYGDVLVKSEKFPNFSKWRDEYINCSQVNESLPPRDELLAFFRARFQAVVASRSAPK.

The GST N-terminal domain occupies 2–81 (AEVKLLGFWY…YIDETFEGPS (80 aa)). Residues serine 12, lysine 39, valine 53, and 65–66 (ES) contribute to the glutathione site. A GST C-terminal domain is found at 86 to 212 (DPYDRALARF…ELLAFFRARF (127 aa)).

Belongs to the GST superfamily. HSP26 family. In terms of tissue distribution, root tip-specific expression.

The catalysed reaction is RX + glutathione = an S-substituted glutathione + a halide anion + H(+). The sequence is that of Probable glutathione S-transferase from Nicotiana tabacum (Common tobacco).